Reading from the N-terminus, the 179-residue chain is O-acetyl-ADP-ribose deacetylase (179 aa).

In terms of domain architecture, Macro spans 1 to 175 (MTSRLQVIQG…LYARLLTQQG (175 aa)). Substrate contacts are provided by residues 11-12 (DI), Asn25, 33-35 (GVD), and 122-126 (STGVY). The Proton acceptor role is filled by Asp35.

The protein belongs to the MacroD-type family. YmdB subfamily. As to quaternary structure, homodimer. Interacts with RNase III.

It carries out the reaction 3''-O-acetyl-ADP-D-ribose + H2O = ADP-D-ribose + acetate + H(+). The catalysed reaction is 2''-O-acetyl-ADP-D-ribose + H2O = ADP-D-ribose + acetate + H(+). Its function is as follows. Deacetylates O-acetyl-ADP ribose to yield ADP-ribose and free acetate. Down-regulates ribonuclease 3 (RNase III) activity. Acts by interacting directly with the region of the ribonuclease that is required for dimerization/activation. This chain is O-acetyl-ADP-ribose deacetylase, found in Salmonella newport (strain SL254).